A 485-amino-acid polypeptide reads, in one-letter code: NADH-quinone oxidoreductase subunit N (485 aa).

14 helical membrane passes run 8-28 (LIAL…MLSI), 35-55 (FLNA…LWFV), 71-91 (GFAM…CTFA), 105-125 (FYLL…ANHL), 127-147 (ALFL…GYAF), 159-179 (YTIL…LVYA), 203-223 (LLAG…LVPF), 235-255 (PAPV…GVVM), 271-291 (VVLG…ALSQ), 297-317 (LLGY…IVLQ), 326-346 (VGVY…VVSL), 373-393 (AAVM…LGFI), 408-430 (WWLV…RVAV), and 455-475 (IVVL…QPLI).

The protein belongs to the complex I subunit 2 family. NDH-1 is composed of 13 different subunits. Subunits NuoA, H, J, K, L, M, N constitute the membrane sector of the complex.

It localises to the cell inner membrane. It catalyses the reaction a quinone + NADH + 5 H(+)(in) = a quinol + NAD(+) + 4 H(+)(out). Its function is as follows. NDH-1 shuttles electrons from NADH, via FMN and iron-sulfur (Fe-S) centers, to quinones in the respiratory chain. The immediate electron acceptor for the enzyme in this species is believed to be ubiquinone. Couples the redox reaction to proton translocation (for every two electrons transferred, four hydrogen ions are translocated across the cytoplasmic membrane), and thus conserves the redox energy in a proton gradient. The chain is NADH-quinone oxidoreductase subunit N from Salmonella choleraesuis (strain SC-B67).